A 177-amino-acid polypeptide reads, in one-letter code: ATP synthase subunit delta (177 aa).

This sequence belongs to the ATPase delta chain family. In terms of assembly, F-type ATPases have 2 components, F(1) - the catalytic core - and F(0) - the membrane proton channel. F(1) has five subunits: alpha(3), beta(3), gamma(1), delta(1), epsilon(1). F(0) has three main subunits: a(1), b(2) and c(10-14). The alpha and beta chains form an alternating ring which encloses part of the gamma chain. F(1) is attached to F(0) by a central stalk formed by the gamma and epsilon chains, while a peripheral stalk is formed by the delta and b chains.

It is found in the cell inner membrane. Functionally, f(1)F(0) ATP synthase produces ATP from ADP in the presence of a proton or sodium gradient. F-type ATPases consist of two structural domains, F(1) containing the extramembraneous catalytic core and F(0) containing the membrane proton channel, linked together by a central stalk and a peripheral stalk. During catalysis, ATP synthesis in the catalytic domain of F(1) is coupled via a rotary mechanism of the central stalk subunits to proton translocation. In terms of biological role, this protein is part of the stalk that links CF(0) to CF(1). It either transmits conformational changes from CF(0) to CF(1) or is implicated in proton conduction. The protein is ATP synthase subunit delta of Yersinia enterocolitica serotype O:8 / biotype 1B (strain NCTC 13174 / 8081).